The sequence spans 714 residues: Mitochondrial division protein 1 (714 aa).

Residues 240-298 adopt a coiled-coil conformation; that stretch reads LNIQKNSTLSEIRDIEVEVENLRQKKEKLLGKIANIEQNQLLLEDNLKQIDDRLDFLEE. Positions 323–354 are disordered; that stretch reads LKNDAIRNEGVTTESISSEASNLPPRRRQQLR. Residues 332–343 are compositionally biased toward polar residues; it reads GVTTESISSEAS. Ser-376 bears the Phosphoserine mark. WD repeat units follow at residues 396–436, 439–478, 500–539, 561–603, 604–642, 644–681, and 685–714; these read THDD…KIGE, GHLA…QLYQ, AHTD…QTID, TQRN…RTLK, GHTD…NKFH, YSAP…SWSC, and GNET…IWAV.

Belongs to the WD repeat MDV1/CAF4 family. In terms of assembly, interacts with CAF4, DNM1 and FIS1, components of the mitochondrial fission machinery. Interacts via its N-terminal, coiled-coil extension (NTE) with FIS1, and via its WD repeats with DNM1.

The protein localises to the mitochondrion outer membrane. Involved in mitochondrial fission. Has a partially redundant function to CAF4 in acting as an adapter protein, binding to FIS1 on the mitochondrial outer membrane and recruiting the dynamin-like GTPase DNM1 to form mitochondrial fission complexes. Formation of these complexes is required to promote constriction and fission of the mitochondrial compartment at a late step in mitochondrial division. This Saccharomyces cerevisiae (strain YJM789) (Baker's yeast) protein is Mitochondrial division protein 1 (MDV1).